The following is a 157-amino-acid chain: MFDVLMYLFESYIHNETEMRVDQDTLTDDLTRAGFHRNDIYSALSWLEKLADIQEGQTAPLYLASDPLAMRIYTQDEELRLDAECRGFLLFLEQMQVLNLETREMIIERVMALETQEFDLEDLKWVILMVLFNVPGCENAYQQMEELLFEVNDGYVQ.

The protein belongs to the Smg family.

The sequence is that of Protein Smg from Pectobacterium atrosepticum (strain SCRI 1043 / ATCC BAA-672) (Erwinia carotovora subsp. atroseptica).